A 222-amino-acid chain; its full sequence is Ribosomal RNA small subunit methyltransferase I (222 aa).

This sequence belongs to the methyltransferase superfamily. RsmI family.

It localises to the cytoplasm. It carries out the reaction cytidine(1402) in 16S rRNA + S-adenosyl-L-methionine = 2'-O-methylcytidine(1402) in 16S rRNA + S-adenosyl-L-homocysteine + H(+). Functionally, catalyzes the 2'-O-methylation of the ribose of cytidine 1402 (C1402) in 16S rRNA. The sequence is that of Ribosomal RNA small subunit methyltransferase I from Mycoplasmopsis pulmonis (strain UAB CTIP) (Mycoplasma pulmonis).